The sequence spans 159 residues: NADH-quinone oxidoreductase subunit B (159 aa).

4 residues coordinate [4Fe-4S] cluster: C37, C38, C102, and C132.

It belongs to the complex I 20 kDa subunit family. As to quaternary structure, NDH-1 is composed of 14 different subunits. Subunits NuoB, C, D, E, F, and G constitute the peripheral sector of the complex. [4Fe-4S] cluster serves as cofactor.

It is found in the cell inner membrane. It carries out the reaction a quinone + NADH + 5 H(+)(in) = a quinol + NAD(+) + 4 H(+)(out). Its function is as follows. NDH-1 shuttles electrons from NADH, via FMN and iron-sulfur (Fe-S) centers, to quinones in the respiratory chain. Couples the redox reaction to proton translocation (for every two electrons transferred, four hydrogen ions are translocated across the cytoplasmic membrane), and thus conserves the redox energy in a proton gradient. This is NADH-quinone oxidoreductase subunit B from Paraburkholderia phymatum (strain DSM 17167 / CIP 108236 / LMG 21445 / STM815) (Burkholderia phymatum).